Reading from the N-terminus, the 395-residue chain is Argininosuccinate synthase (395 aa).

8-16 (AYSGGLDTS) contacts ATP. Residues Tyr86 and Ser91 each contribute to the L-citrulline site. Gly116 contacts ATP. Positions 118, 122, and 123 each coordinate L-aspartate. Asn122 is a binding site for L-citrulline. L-citrulline contacts are provided by Arg126, Ser172, Ser181, Glu257, and Tyr269.

Belongs to the argininosuccinate synthase family. Type 1 subfamily. In terms of assembly, homotetramer.

The protein localises to the cytoplasm. It carries out the reaction L-citrulline + L-aspartate + ATP = 2-(N(omega)-L-arginino)succinate + AMP + diphosphate + H(+). The protein operates within amino-acid biosynthesis; L-arginine biosynthesis; L-arginine from L-ornithine and carbamoyl phosphate: step 2/3. This chain is Argininosuccinate synthase, found in Methanosarcina barkeri (strain Fusaro / DSM 804).